Consider the following 259-residue polypeptide: Submandibular glandular kallikrein-9 (259 aa).

Residues 1–18 (MWFLILFLALSLGQIDAA) form the signal peptide. A propeptide spans 19-24 (PPGQSR) (activation peptide). The region spanning 25–256 (VVGGYNCETN…FTSWIKKVMK (232 aa)) is the Peptidase S1 domain. 5 disulfides stabilise this stretch: Cys-31/Cys-171, Cys-48/Cys-64, Cys-150/Cys-217, Cys-182/Cys-196, and Cys-207/Cys-232. His-63 functions as the Charge relay system in the catalytic mechanism. N-linked (GlcNAc...) asparagine glycosylation occurs at Asn-106. Asp-118 acts as the Charge relay system in catalysis. The active-site Charge relay system is Ser-211.

Belongs to the peptidase S1 family. Kallikrein subfamily. As to quaternary structure, heterodimer of a light chain and heavy chain linked by a disulfide bond.

It catalyses the reaction Preferential cleavage of Arg-|-Xaa bonds in small molecule substrates. Highly selective action to release kallidin (lysyl-bradykinin) from kininogen involves hydrolysis of Met-|-Xaa or Leu-|-Xaa.. Glandular kallikreins cleave Met-Lys and Arg-Ser bonds in kininogen to release Lys-bradykinin. This enzyme has a vasoconstrictor activity. KLK-9 has both a chymotrypsin-like and a trypsin-like properties. This is Submandibular glandular kallikrein-9 (Klk9) from Rattus norvegicus (Rat).